The primary structure comprises 461 residues: Cysteine--tRNA ligase (461 aa).

Cysteine 28 contacts Zn(2+). Residues 30-40 carry the 'HIGH' region motif; the sequence is ITVYDLCHIGH. Residues cysteine 209, histidine 234, and glutamate 238 each coordinate Zn(2+). Residues 266–270 carry the 'KMSKS' region motif; sequence KMSKS. ATP is bound at residue lysine 269.

Belongs to the class-I aminoacyl-tRNA synthetase family. In terms of assembly, monomer. It depends on Zn(2+) as a cofactor.

It localises to the cytoplasm. The enzyme catalyses tRNA(Cys) + L-cysteine + ATP = L-cysteinyl-tRNA(Cys) + AMP + diphosphate. The polypeptide is Cysteine--tRNA ligase (Escherichia coli O6:K15:H31 (strain 536 / UPEC)).